Here is a 426-residue protein sequence, read N- to C-terminus: Serine--tRNA ligase (426 aa).

Residue 233-235 (TAE) participates in L-serine binding. 264–266 (RSE) is an ATP binding site. Glu287 contacts L-serine. 351 to 354 (EISS) is an ATP binding site. Ser387 contributes to the L-serine binding site.

Belongs to the class-II aminoacyl-tRNA synthetase family. Type-1 seryl-tRNA synthetase subfamily. In terms of assembly, homodimer. The tRNA molecule binds across the dimer.

The protein resides in the cytoplasm. It carries out the reaction tRNA(Ser) + L-serine + ATP = L-seryl-tRNA(Ser) + AMP + diphosphate + H(+). The catalysed reaction is tRNA(Sec) + L-serine + ATP = L-seryl-tRNA(Sec) + AMP + diphosphate + H(+). It functions in the pathway aminoacyl-tRNA biosynthesis; selenocysteinyl-tRNA(Sec) biosynthesis; L-seryl-tRNA(Sec) from L-serine and tRNA(Sec): step 1/1. In terms of biological role, catalyzes the attachment of serine to tRNA(Ser). Is also able to aminoacylate tRNA(Sec) with serine, to form the misacylated tRNA L-seryl-tRNA(Sec), which will be further converted into selenocysteinyl-tRNA(Sec). The sequence is that of Serine--tRNA ligase from Clostridium botulinum (strain Langeland / NCTC 10281 / Type F).